The following is an 89-amino-acid chain: Small ribosomal subunit protein uS15 (89 aa).

The protein belongs to the universal ribosomal protein uS15 family. In terms of assembly, part of the 30S ribosomal subunit. Forms a bridge to the 50S subunit in the 70S ribosome, contacting the 23S rRNA.

In terms of biological role, one of the primary rRNA binding proteins, it binds directly to 16S rRNA where it helps nucleate assembly of the platform of the 30S subunit by binding and bridging several RNA helices of the 16S rRNA. Functionally, forms an intersubunit bridge (bridge B4) with the 23S rRNA of the 50S subunit in the ribosome. In Klebsiella pneumoniae (strain 342), this protein is Small ribosomal subunit protein uS15.